The following is a 549-amino-acid chain: Cytochrome c oxidase subunit 1 homolog, bacteroid (549 aa).

A run of 3 helical transmembrane segments spans residues 12 to 32 (IGES…VIAA), 39 to 59 (PFAF…FCIV), and 87 to 107 (FSSF…LIIA). His131 lines the heme b pocket. 8 consecutive transmembrane segments (helical) span residues 132–152 (TSAV…FYVV), 168–188 (FVVV…LLGV), 201–221 (ADLW…ATII), 228–248 (IFVA…LHLG), 279–299 (GHNA…YYFI), 312–332 (LSII…PHHL), 344–364 (LGMT…INGL), and 382–402 (MLVV…MMSI). Residues His280, His330, and His331 each contribute to the Cu cation site. 2 residues coordinate heme b: His418 and His420. 3 helical membrane-spanning segments follow: residues 423–443 (ALGW…PWAW), 458–478 (FWVA…SGIL), and 512–532 (AGGG…WMTV).

It belongs to the heme-copper respiratory oxidase family. It depends on Cu(2+) as a cofactor. Heme b is required as a cofactor.

It localises to the cell membrane. The enzyme catalyses 4 Fe(II)-[cytochrome c] + O2 + 8 H(+)(in) = 4 Fe(III)-[cytochrome c] + 2 H2O + 4 H(+)(out). It functions in the pathway energy metabolism; oxidative phosphorylation. Functionally, cytochrome c oxidase is the component of the respiratory chain that catalyzes the reduction of oxygen to water. Subunits 1-3 form the functional core of the enzyme complex. Co I is the catalytic subunit of the enzyme. Electrons originating in cytochrome c or a quinol are transferred to the bimetallic center formed by a high-spin heme and copper B. This Bradyrhizobium diazoefficiens (strain JCM 10833 / BCRC 13528 / IAM 13628 / NBRC 14792 / USDA 110) protein is Cytochrome c oxidase subunit 1 homolog, bacteroid (fixN).